Reading from the N-terminus, the 150-residue chain is Catabolic 3-dehydroquinase (150 aa).

Y24 (proton acceptor) is an active-site residue. Substrate-binding residues include N75, H81, and D88. H101 functions as the Proton donor in the catalytic mechanism. Substrate is bound by residues 102–103 (IS) and R112.

The protein belongs to the type-II 3-dehydroquinase family. Homododecamer. Adopts a ring-like structure, composed of an arrangement of two hexameric rings stacked on top of one another.

The catalysed reaction is 3-dehydroquinate = 3-dehydroshikimate + H2O. It participates in aromatic compound metabolism; 3,4-dihydroxybenzoate biosynthesis; 3,4-dihydroxybenzoate from 3-dehydroquinate: step 1/2. Is involved in the catabolism of quinate. Allows the utilization of quinate as carbon source via the beta-ketoadipate pathway. In Verticillium alfalfae (strain VaMs.102 / ATCC MYA-4576 / FGSC 10136) (Verticillium wilt of alfalfa), this protein is Catabolic 3-dehydroquinase.